We begin with the raw amino-acid sequence, 198 residues long: Na(+)-translocating NADH-quinone reductase subunit E (198 aa).

Transmembrane regions (helical) follow at residues 11–31 (SVFIENMALSFFLGMCTFLAV), 35–55 (VSTAFGLGVAVTVVLGISVPV), 77–97 (FLNFITFIGVIAALVQILEMI), 110–130 (GIFLPLITVNCAIFGGVSFMV), 140–160 (IVYGIGAGTGWMLAIVALAGI), and 176–196 (LGITFITVGLMALGFMSFSGV).

The protein belongs to the NqrDE/RnfAE family. In terms of assembly, composed of six subunits; NqrA, NqrB, NqrC, NqrD, NqrE and NqrF.

The protein resides in the cell inner membrane. The catalysed reaction is a ubiquinone + n Na(+)(in) + NADH + H(+) = a ubiquinol + n Na(+)(out) + NAD(+). Its function is as follows. NQR complex catalyzes the reduction of ubiquinone-1 to ubiquinol by two successive reactions, coupled with the transport of Na(+) ions from the cytoplasm to the periplasm. NqrA to NqrE are probably involved in the second step, the conversion of ubisemiquinone to ubiquinol. The chain is Na(+)-translocating NADH-quinone reductase subunit E from Histophilus somni (strain 2336) (Haemophilus somnus).